The chain runs to 223 residues: Deoxyribose-phosphate aldolase (223 aa).

Catalysis depends on Asp91, which acts as the Proton donor/acceptor. The active-site Schiff-base intermediate with acetaldehyde is Lys153. The Proton donor/acceptor role is filled by Lys182.

It belongs to the DeoC/FbaB aldolase family. DeoC type 1 subfamily.

The protein localises to the cytoplasm. The catalysed reaction is 2-deoxy-D-ribose 5-phosphate = D-glyceraldehyde 3-phosphate + acetaldehyde. It participates in carbohydrate degradation; 2-deoxy-D-ribose 1-phosphate degradation; D-glyceraldehyde 3-phosphate and acetaldehyde from 2-deoxy-alpha-D-ribose 1-phosphate: step 2/2. Its function is as follows. Catalyzes a reversible aldol reaction between acetaldehyde and D-glyceraldehyde 3-phosphate to generate 2-deoxy-D-ribose 5-phosphate. This chain is Deoxyribose-phosphate aldolase, found in Yersinia pestis bv. Antiqua (strain Angola).